Here is a 565-residue protein sequence, read N- to C-terminus: Molybdenum cofactor biosynthesis protein 1 (565 aa).

Residues 3–367 (LLARHAIRLL…AVQRKKKQHA (365 aa)) are molybdenum cofactor biosynthesis protein A. A Radical SAM core domain is found at 64 to 276 (SFGRHHTYLR…LQIIRQRWPD (213 aa)). GTP is bound at residue arginine 73. [4Fe-4S] cluster contacts are provided by cysteine 80 and cysteine 84. S-adenosyl-L-methionine is bound at residue tyrosine 86. Cysteine 87 is a binding site for [4Fe-4S] cluster. A GTP-binding site is contributed by arginine 123. Glycine 127 lines the S-adenosyl-L-methionine pocket. Threonine 154 contributes to the GTP binding site. Serine 178 is a binding site for S-adenosyl-L-methionine. Lysine 214 contributes to the GTP binding site. Methionine 248 lines the S-adenosyl-L-methionine pocket. [4Fe-4S] cluster-binding residues include cysteine 311 and cysteine 314. A GTP-binding site is contributed by 316–318 (RLR). Cysteine 328 is a [4Fe-4S] cluster binding site. Aspartate 525 (for molybdenum cofactor biosynthesis protein C activity) is an active-site residue.

This sequence in the C-terminal section; belongs to the MoaC family. It in the N-terminal section; belongs to the radical SAM superfamily. MoaA family. In terms of assembly, isoform Mocs1a and isoform Mocs1b probably form a heterooligomer. The cofactor is [4Fe-4S] cluster.

The catalysed reaction is GTP + AH2 + S-adenosyl-L-methionine = (8S)-3',8-cyclo-7,8-dihydroguanosine 5'-triphosphate + 5'-deoxyadenosine + L-methionine + A + H(+). It catalyses the reaction (8S)-3',8-cyclo-7,8-dihydroguanosine 5'-triphosphate = cyclic pyranopterin phosphate + diphosphate. It participates in cofactor biosynthesis; molybdopterin biosynthesis. Its function is as follows. Isoform Mocs1a and isoform Mocs1b probably form a complex that catalyzes the conversion of 5'-GTP to cyclic pyranopterin monophosphate (cPMP). Mocs1a catalyzes the cyclization of GTP to (8S)-3',8-cyclo-7,8-dihydroguanosine 5'-triphosphate and Mocs1b catalyzes the subsequent conversion of (8S)-3',8-cyclo-7,8-dihydroguanosine 5'-triphosphate to cPMP. The polypeptide is Molybdenum cofactor biosynthesis protein 1 (Mocs1) (Drosophila melanogaster (Fruit fly)).